Consider the following 307-residue polypeptide: Porphobilinogen deaminase (307 aa).

S-(dipyrrolylmethanemethyl)cysteine is present on C239.

It belongs to the HMBS family. In terms of assembly, monomer. Requires dipyrromethane as cofactor.

It catalyses the reaction 4 porphobilinogen + H2O = hydroxymethylbilane + 4 NH4(+). Its pathway is porphyrin-containing compound metabolism; protoporphyrin-IX biosynthesis; coproporphyrinogen-III from 5-aminolevulinate: step 2/4. Tetrapolymerization of the monopyrrole PBG into the hydroxymethylbilane pre-uroporphyrinogen in several discrete steps. The chain is Porphobilinogen deaminase from Campylobacter jejuni subsp. jejuni serotype O:23/36 (strain 81-176).